Consider the following 1114-residue polypeptide: WD repeat-containing protein 72 (1114 aa).

7 WD repeats span residues 15 to 54 (APPHSITAIMITDDQQTIVTGSQEGQLCLWSLSPELKISA), 60 to 102 (GHSA…CVEK), 160 to 197 (KCMCIVHSVRIQEDSLLVVSITGELKVWDLSSSINSIQ), 327 to 373 (EENK…SKFD), 413 to 452 (GMTATITSSEYIPNLDKLICGCEDGTIFITKALNAAKAGL), 470 to 515 (GHHQ…ILHT), and 566 to 605 (KHLFPVRMIRWHPVENFLIVGCTDDSVYIWEIETGTLERH). Disordered regions lie at residues 634–658 (SETHKHKSIEQKSSNSHQPGPVPCP) and 749–798 (SLQT…PPRK). Residues 780 to 796 (KRQKKMKSSKKAHPKPP) show a composition bias toward basic residues. A phosphoserine mark is found at serine 1093 and serine 1095.

Expressed in maturation stage ameloblasts (at protein level).

The protein resides in the cytoplasmic vesicle. In terms of biological role, plays a major role in formation of tooth enamel. Specifically required during the maturation phase of amelogenesis for normal formation of the enamel matrix and clearance of enamel proteins. May be involved in localization of the calcium transporter SLC24A4 to the ameloblast cell membrane. This is WD repeat-containing protein 72 from Mus musculus (Mouse).